The following is a 248-amino-acid chain: Tyrosine recombinase XerD-like (248 aa).

The Core-binding (CB) domain maps to 1-72 (MKSYIEPFIA…TANQFLYYLY (72 aa)). Positions 85 to 248 (DTMKVMRTEK…PVTLEKYYKS (164 aa)) constitute a Tyr recombinase domain. Active-site residues include Lys149 and Arg213. Tyr245 functions as the O-(3'-phospho-DNA)-tyrosine intermediate in the catalytic mechanism.

It belongs to the 'phage' integrase family. XerD-like subfamily.

It is found in the cytoplasm. Putative tyrosine recombinase. Not involved in the cutting and rejoining of the recombining DNA molecules on dif(SL) site. This is Tyrosine recombinase XerD-like from Streptococcus pyogenes serotype M28 (strain MGAS6180).